Reading from the N-terminus, the 363-residue chain is Probable L-tyrosine/L-aspartate decarboxylase (363 aa).

Residue Lys-224 is modified to N6-(pyridoxal phosphate)lysine.

This sequence belongs to the group II decarboxylase family. MfnA subfamily. Requires pyridoxal 5'-phosphate as cofactor.

It catalyses the reaction L-tyrosine + H(+) = tyramine + CO2. It carries out the reaction L-aspartate + H(+) = beta-alanine + CO2. The protein operates within cofactor biosynthesis; methanofuran biosynthesis. It participates in cofactor biosynthesis; coenzyme A biosynthesis. In terms of biological role, catalyzes the decarboxylation of L-tyrosine to produce tyramine for methanofuran biosynthesis. Can also catalyze the decarboxylation of L-aspartate to produce beta-alanine for coenzyme A (CoA) biosynthesis. The chain is Probable L-tyrosine/L-aspartate decarboxylase from Methanosphaerula palustris (strain ATCC BAA-1556 / DSM 19958 / E1-9c).